A 543-amino-acid polypeptide reads, in one-letter code: Steroid receptor seven-up, isoforms B/C (543 aa).

Residues 38 to 191 (PPHSAWHEPP…HSQSSNSGSQ (154 aa)) form a disordered region. The segment covering 56–68 (AASAGPGTTTGSV) has biased composition (low complexity). Over residues 83–101 (QQSAVIKQDLSCPSLNQAG) the composition is skewed to polar residues. Positions 122 to 141 (GSAGGHHSGSGSGSGSGVNP) are enriched in gly residues. Polar residues predominate over residues 158 to 170 (MLTSIKGQPTGCG). Residues 171 to 191 (STTPSSQANSSHSQSSNSGSQ) are compositionally biased toward low complexity. Positions 197–272 (NIECVVCGDK…MGMRREAVQR (76 aa)) form a DNA-binding region, nuclear receptor. 2 NR C4-type zinc fingers span residues 200-220 (CVVC…CEGC) and 236-260 (CRGS…LKKC). The region spanning 307–532 (YLSSYISLLL…TLIRDMLLSG (226 aa)) is the NR LBD domain.

The protein belongs to the nuclear hormone receptor family. NR2 subfamily. As to expression, expressed in several embryonic tissues; dorsal vessel, oenocyte and fat body. CNS expression is dynamic and confined to temporally restricted subsections of the NB lineage; expressed in many NB and GMCs, but only a small number of neurons.

Its subcellular location is the nucleus. Its function is as follows. Receptor that is required in photoreceptors R1, R3, R4 and R6 during eye development; generation of the ganglion mother cell-2 (GMC-2) fate in the nb7-3 lineage, coinciding with the transition in the expression of HB to KR in the neuroblasts (NBs). The polypeptide is Steroid receptor seven-up, isoforms B/C (svp) (Drosophila melanogaster (Fruit fly)).